The sequence spans 417 residues: NADH-quinone oxidoreductase subunit D (417 aa).

Belongs to the complex I 49 kDa subunit family. In terms of assembly, NDH-1 is composed of 14 different subunits. Subunits NuoB, C, D, E, F, and G constitute the peripheral sector of the complex.

It is found in the cell inner membrane. It catalyses the reaction a quinone + NADH + 5 H(+)(in) = a quinol + NAD(+) + 4 H(+)(out). NDH-1 shuttles electrons from NADH, via FMN and iron-sulfur (Fe-S) centers, to quinones in the respiratory chain. The immediate electron acceptor for the enzyme in this species is believed to be ubiquinone. Couples the redox reaction to proton translocation (for every two electrons transferred, four hydrogen ions are translocated across the cytoplasmic membrane), and thus conserves the redox energy in a proton gradient. The polypeptide is NADH-quinone oxidoreductase subunit D (Paracidovorax citrulli (strain AAC00-1) (Acidovorax citrulli)).